A 456-amino-acid chain; its full sequence is Bifunctional protein GlmU (456 aa).

Residues 1-229 (MLNNAMSVVI…LSEVEGVNNR (229 aa)) form a pyrophosphorylase region. Residues 11–14 (LAAG), K25, Q76, 81–82 (GT), 103–105 (YGD), G140, E154, N169, and N227 contribute to the UDP-N-acetyl-alpha-D-glucosamine site. Position 105 (D105) interacts with Mg(2+). N227 serves as a coordination point for Mg(2+). The tract at residues 230 to 250 (LQLSRLERVYQSEQAEKLLLA) is linker. The N-acetyltransferase stretch occupies residues 251–456 (GVMLRDPARF…EGWRRPVKKK (206 aa)). Residues R333 and K351 each coordinate UDP-N-acetyl-alpha-D-glucosamine. The active-site Proton acceptor is H363. Positions 366 and 377 each coordinate UDP-N-acetyl-alpha-D-glucosamine. Acetyl-CoA-binding positions include A380, 386 to 387 (NY), S405, A423, and R440.

The protein in the N-terminal section; belongs to the N-acetylglucosamine-1-phosphate uridyltransferase family. This sequence in the C-terminal section; belongs to the transferase hexapeptide repeat family. As to quaternary structure, homotrimer. It depends on Mg(2+) as a cofactor.

It localises to the cytoplasm. It catalyses the reaction alpha-D-glucosamine 1-phosphate + acetyl-CoA = N-acetyl-alpha-D-glucosamine 1-phosphate + CoA + H(+). The catalysed reaction is N-acetyl-alpha-D-glucosamine 1-phosphate + UTP + H(+) = UDP-N-acetyl-alpha-D-glucosamine + diphosphate. It participates in nucleotide-sugar biosynthesis; UDP-N-acetyl-alpha-D-glucosamine biosynthesis; N-acetyl-alpha-D-glucosamine 1-phosphate from alpha-D-glucosamine 6-phosphate (route II): step 2/2. The protein operates within nucleotide-sugar biosynthesis; UDP-N-acetyl-alpha-D-glucosamine biosynthesis; UDP-N-acetyl-alpha-D-glucosamine from N-acetyl-alpha-D-glucosamine 1-phosphate: step 1/1. It functions in the pathway bacterial outer membrane biogenesis; LPS lipid A biosynthesis. Functionally, catalyzes the last two sequential reactions in the de novo biosynthetic pathway for UDP-N-acetylglucosamine (UDP-GlcNAc). The C-terminal domain catalyzes the transfer of acetyl group from acetyl coenzyme A to glucosamine-1-phosphate (GlcN-1-P) to produce N-acetylglucosamine-1-phosphate (GlcNAc-1-P), which is converted into UDP-GlcNAc by the transfer of uridine 5-monophosphate (from uridine 5-triphosphate), a reaction catalyzed by the N-terminal domain. The protein is Bifunctional protein GlmU of Escherichia coli O127:H6 (strain E2348/69 / EPEC).